Here is a 107-residue protein sequence, read N- to C-terminus: Iron-sulfur cluster assembly protein CyaY (107 aa).

Belongs to the frataxin family.

Functionally, involved in iron-sulfur (Fe-S) cluster assembly. May act as a regulator of Fe-S biogenesis. This Yersinia pseudotuberculosis serotype O:1b (strain IP 31758) protein is Iron-sulfur cluster assembly protein CyaY.